We begin with the raw amino-acid sequence, 71 residues long: Sec-independent protein translocase protein TatA (71 aa).

A helical transmembrane segment spans residues 1–21 (MGSFSMWHWLIVLAIVLLLFG). The interval 40-71 (KKGMSDDDTAPDGTPKPADQSKTVDHRADDHK) is disordered. Over residues 61–71 (KTVDHRADDHK) the composition is skewed to basic and acidic residues.

This sequence belongs to the TatA/E family. In terms of assembly, the Tat system comprises two distinct complexes: a TatABC complex, containing multiple copies of TatA, TatB and TatC subunits, and a separate TatA complex, containing only TatA subunits. Substrates initially bind to the TatABC complex, which probably triggers association of the separate TatA complex to form the active translocon.

The protein localises to the cell inner membrane. Functionally, part of the twin-arginine translocation (Tat) system that transports large folded proteins containing a characteristic twin-arginine motif in their signal peptide across membranes. TatA could form the protein-conducting channel of the Tat system. The chain is Sec-independent protein translocase protein TatA from Allorhizobium ampelinum (strain ATCC BAA-846 / DSM 112012 / S4) (Agrobacterium vitis (strain S4)).